Consider the following 39-residue polypeptide: Potassium channel toxin alpha-KTx 2.17 (39 aa).

Disulfide bonds link Cys-7–Cys-29, Cys-13–Cys-34, and Cys-17–Cys-36. Ile-39 is modified (isoleucine amide).

It belongs to the short scorpion toxin superfamily. Potassium channel inhibitor family. Alpha-KTx 02 subfamily. As to expression, expressed by the venom gland.

The protein localises to the secreted. Its function is as follows. Blocks human voltage-gated potassium channels Kv1.1/KCNA1 (IC(50)=4.8 nM) and Kv1.2/KCNA2 (IC(50)=2.9 nM). The chain is Potassium channel toxin alpha-KTx 2.17 from Centruroides tecomanus (Scorpion).